A 664-amino-acid chain; its full sequence is MSTEPLSINPLSAKPLSATQEPSTSSKPSRREQRAAAQRFIETLQGTAFPNSKRIYLTGSRDDIGVPMREIQLSPTLLGGSKDDPQYEPNEPIPVYDTSGPYGDPAAQPDVHVGLAKLRANWIAERHDTEALSGVSSDFTQQRMADAGLDHLRFEHLPRPLRAKAGKRVTQLHYARQGMITPEMEFIAIRENMGRERIRGEVLRQQHPGQSFGALLPENITPEFVRQEVAAGRAIIPSNINHPESEPMIIGRNFLVKVNANIGNSAVTSSIEEEVEKLVWSTRWGADTVMDLSTGRYIHETREWILRNSPVPIGTVPIYQALEKVNGVAENLNWEMFRDTLLEQAEQGVDYFTIHAGVLLRYVPMTAKRLTGIVSRGGSIMAKWCLSHHKESFLYEHFREICEICAAYDVALSLGDGLRPGSIQDANDEAQFAELHTLGELTKIAWEYDVQVMIEGPGHVPMQMIRRNMTEELEHCHEAPFYTLGPLTTDIAPGYDHFTSGIGAAMIGWFGCAMLCYVTPKEHLGLPNKEDVKQGLITYKIAAHAADLAKGHPGAQIRDNAMSKARFEFRWEDQFNLALDPQTARAYHDETLPQESGKVAHFCSMCGPKFCSMKISQEVRDYAAKQETEAKPIEIGMAEMSQEFRSRGSELYHSATSLQAEESK.

2 stretches are compositionally biased toward polar residues: residues 1-10 and 17-27; these read MSTEPLSINP and SATQEPSTSSK. The tract at residues 1 to 37 is disordered; it reads MSTEPLSINPLSAKPLSATQEPSTSSKPSRREQRAAA. Residues N261, M290, Y319, H355, 375–377, 416–419, and E455 contribute to the substrate site; these read SRG and DGLR. H459 serves as a coordination point for Zn(2+). Y482 is a substrate binding site. Residue H523 coordinates Zn(2+). Positions 603, 606, and 611 each coordinate [4Fe-4S] cluster.

It belongs to the ThiC family. Homodimer. It depends on [4Fe-4S] cluster as a cofactor.

The catalysed reaction is 5-amino-1-(5-phospho-beta-D-ribosyl)imidazole + S-adenosyl-L-methionine = 4-amino-2-methyl-5-(phosphooxymethyl)pyrimidine + CO + 5'-deoxyadenosine + formate + L-methionine + 3 H(+). The protein operates within cofactor biosynthesis; thiamine diphosphate biosynthesis. Its function is as follows. Catalyzes the synthesis of the hydroxymethylpyrimidine phosphate (HMP-P) moiety of thiamine from aminoimidazole ribotide (AIR) in a radical S-adenosyl-L-methionine (SAM)-dependent reaction. The chain is Phosphomethylpyrimidine synthase from Pectobacterium atrosepticum (strain SCRI 1043 / ATCC BAA-672) (Erwinia carotovora subsp. atroseptica).